The sequence spans 354 residues: tRNA-specific 2-thiouridylase MnmA (354 aa).

Residues 6–13 (LLSGGVDS) and Leu33 each bind ATP. The active-site Nucleophile is the Cys100. Cys100 and Cys195 are oxidised to a cystine. Residue Gly123 participates in ATP binding. The interval 145-147 (KDQ) is interaction with tRNA. The active-site Cysteine persulfide intermediate is the Cys195.

The protein belongs to the MnmA/TRMU family.

Its subcellular location is the cytoplasm. The catalysed reaction is S-sulfanyl-L-cysteinyl-[protein] + uridine(34) in tRNA + AH2 + ATP = 2-thiouridine(34) in tRNA + L-cysteinyl-[protein] + A + AMP + diphosphate + H(+). In terms of biological role, catalyzes the 2-thiolation of uridine at the wobble position (U34) of tRNA, leading to the formation of s(2)U34. The protein is tRNA-specific 2-thiouridylase MnmA of Borrelia hermsii (strain HS1 / DAH).